A 426-amino-acid polypeptide reads, in one-letter code: 3-phosphoshikimate 1-carboxyvinyltransferase (426 aa).

3-phosphoshikimate-binding residues include Lys-22, Ser-23, and Arg-27. Lys-22 lines the phosphoenolpyruvate pocket. 2 residues coordinate phosphoenolpyruvate: Gly-96 and Arg-124. 3-phosphoshikimate contacts are provided by Ser-170, Ser-171, Gln-172, Ser-198, Asp-314, Asn-337, and Lys-341. Gln-172 lines the phosphoenolpyruvate pocket. Asp-314 (proton acceptor) is an active-site residue. Phosphoenolpyruvate is bound by residues Arg-345, Arg-387, and Lys-412.

It belongs to the EPSP synthase family. In terms of assembly, monomer.

The protein localises to the cytoplasm. The enzyme catalyses 3-phosphoshikimate + phosphoenolpyruvate = 5-O-(1-carboxyvinyl)-3-phosphoshikimate + phosphate. Its pathway is metabolic intermediate biosynthesis; chorismate biosynthesis; chorismate from D-erythrose 4-phosphate and phosphoenolpyruvate: step 6/7. Functionally, catalyzes the transfer of the enolpyruvyl moiety of phosphoenolpyruvate (PEP) to the 5-hydroxyl of shikimate-3-phosphate (S3P) to produce enolpyruvyl shikimate-3-phosphate and inorganic phosphate. This Shewanella sp. (strain MR-7) protein is 3-phosphoshikimate 1-carboxyvinyltransferase.